Consider the following 204-residue polypeptide: Large ribosomal subunit protein bL25 (204 aa).

Positions 1 to 20 (MSETYELKAETRDRVGKGSS) are disordered.

It belongs to the bacterial ribosomal protein bL25 family. CTC subfamily. Part of the 50S ribosomal subunit; part of the 5S rRNA/L5/L18/L25 subcomplex. Contacts the 5S rRNA. Binds to the 5S rRNA independently of L5 and L18.

This is one of the proteins that binds to the 5S RNA in the ribosome where it forms part of the central protuberance. The polypeptide is Large ribosomal subunit protein bL25 (Rhizobium meliloti (strain 1021) (Ensifer meliloti)).